The following is a 614-amino-acid chain: Sodium- and chloride-dependent betaine transporter (614 aa).

The segment at 1-33 (MDRKVAVPEDGPPVVSWLPEEGEKLDQEGEDQV) is disordered. Topologically, residues 1–44 (MDRKVAVPEDGPPVVSWLPEEGEKLDQEGEDQVKDRGQWTNKME) are cytoplasmic. Basic and acidic residues predominate over residues 21 to 33 (EGEKLDQEGEDQV). Helical transmembrane passes span 45–65 (FVLS…FPYL), 73–92 (AFFI…VFFL), and 117–137 (GIGL…IIIL). The Extracellular portion of the chain corresponds to 138–210 (AWALFYLFSS…SGIHDLGALR (73 aa)). Cys-157 and Cys-166 form a disulfide bridge. 2 N-linked (GlcNAc...) asparagine glycosylation sites follow: Asn-171 and Asn-183. 9 helical membrane-spanning segments follow: residues 211-229 (WELA…FCIW), 238-255 (VVYF…ILLI), 291-308 (IFFS…LGSY), 320-341 (IALC…FSIL), 374-393 (MPLS…FLGL), 423-441 (LLIL…FLVT), 458-478 (GICL…VYGA), 499-518 (ISWL…FSLS), and 538-556 (IGWF…FVII). Residues 557-614 (TLLKTRGSFKKRLRQLTTPDPSLPQPKQHLYLDGGTSQDCGPSPTKEGLIVGEKETHL) are Cytoplasmic-facing. Positions 591–614 (GTSQDCGPSPTKEGLIVGEKETHL) are disordered.

Belongs to the sodium:neurotransmitter symporter (SNF) (TC 2.A.22) family. SLC6A12 subfamily. Interacts with LIN7C. Kidney.

Its subcellular location is the basolateral cell membrane. It is found in the cell membrane. It carries out the reaction 4-aminobutanoate(out) + chloride(out) + 3 Na(+)(out) = 4-aminobutanoate(in) + chloride(in) + 3 Na(+)(in). The enzyme catalyses glycine betaine(out) + 2 chloride(out) + 3 Na(+)(out) = glycine betaine(in) + 2 chloride(in) + 3 Na(+)(in). Transporter that mediates cellular uptake of betaine and GABA in a sodium- and chloride-dependent process. May have a role in regulation of GABAergic transmission in the brain through the reuptake of GABA into presynaptic terminals, as well as in osmotic regulation. Probably also involved in renal and hepatic osmotic regulation. The polypeptide is Sodium- and chloride-dependent betaine transporter (SLC6A12) (Canis lupus familiaris (Dog)).